A 224-amino-acid chain; its full sequence is MVKKLQIAIDGPASAGKSTVAKLVAKKLGYIYCDTGAMYRAVTYAALKANISLDDDEALKNLLQDFKLEFVPAEPEQKVFVNGEEVTQIIRTPDITNNVSLVSAQPSVRQDLTHRQQEIADNGGIVMDGRDIGTTVLPNAEVKIFLVASVEQRALRRYKENIAKGIDTPLEVLEKEIAERDYKDSHRKISPLVQAKDAVKVDTTPLTIDEVVNEIMNIIEERNH.

11–19 provides a ligand contact to ATP; the sequence is GPASAGKST.

Belongs to the cytidylate kinase family. Type 1 subfamily.

It is found in the cytoplasm. It carries out the reaction CMP + ATP = CDP + ADP. The enzyme catalyses dCMP + ATP = dCDP + ADP. The chain is Cytidylate kinase from Ligilactobacillus salivarius (strain UCC118) (Lactobacillus salivarius).